Reading from the N-terminus, the 70-residue chain is uncharacterized protein (70 aa).

This is an uncharacterized protein from Saccharomyces cerevisiae (strain ATCC 204508 / S288c) (Baker's yeast).